The sequence spans 244 residues: Small ribosomal subunit protein uS2m (244 aa).

The protein belongs to the universal ribosomal protein uS2 family.

Its subcellular location is the mitochondrion. This Dictyostelium discoideum (Social amoeba) protein is Small ribosomal subunit protein uS2m (mrps2).